Here is a 701-residue protein sequence, read N- to C-terminus: Elongation factor G (701 aa).

Residues 8-291 enclose the tr-type G domain; that stretch reads SRYRNIGIVA…AVIDYLPAPV (284 aa). GTP contacts are provided by residues 17 to 24, 89 to 93, and 143 to 146; these read AHVDAGKT, DTPGH, and NKMD.

This sequence belongs to the TRAFAC class translation factor GTPase superfamily. Classic translation factor GTPase family. EF-G/EF-2 subfamily.

It localises to the cytoplasm. Functionally, catalyzes the GTP-dependent ribosomal translocation step during translation elongation. During this step, the ribosome changes from the pre-translocational (PRE) to the post-translocational (POST) state as the newly formed A-site-bound peptidyl-tRNA and P-site-bound deacylated tRNA move to the P and E sites, respectively. Catalyzes the coordinated movement of the two tRNA molecules, the mRNA and conformational changes in the ribosome. This Pseudomonas fluorescens (strain SBW25) protein is Elongation factor G.